We begin with the raw amino-acid sequence, 101 residues long: Urease subunit beta (101 aa).

This sequence belongs to the urease beta subunit family. Heterotrimer of UreA (gamma), UreB (beta) and UreC (alpha) subunits. Three heterotrimers associate to form the active enzyme.

The protein localises to the cytoplasm. It catalyses the reaction urea + 2 H2O + H(+) = hydrogencarbonate + 2 NH4(+). Its pathway is nitrogen metabolism; urea degradation; CO(2) and NH(3) from urea (urease route): step 1/1. This is Urease subunit beta from Roseobacter denitrificans (strain ATCC 33942 / OCh 114) (Erythrobacter sp. (strain OCh 114)).